The chain runs to 332 residues: Super small secreted glycoprotein (332 aa).

Positions 1-33 (MGSGYQLLQLPRERFRKTSFLVWVIILFQRAIS) are cleaved as a signal peptide. N-linked (GlcNAc...) asparagine; by host glycosylation is present at N41. Cystine bridges form between C109–C136 and C122–C148. N-linked (GlcNAc...) asparagine; by host glycosylation is found at N205, N229, N239, N258, and N269.

This sequence belongs to the filoviruses glycoprotein family.

It localises to the secreted. This Reston ebolavirus (strain Reston-89) (REBOV) protein is Super small secreted glycoprotein (GP).